A 187-amino-acid chain; its full sequence is Accessory gene regulator protein B (187 aa).

The next 5 membrane-spanning stretches (helical) occupy residues 49–69, 82–102, 106–126, 144–164, and 166–186; these read ISIF…YMLI, ILCY…LINI, FTYL…YAPA, LSII…PFYA, and FMLL…FPKE.

Belongs to the AgrB family.

Its subcellular location is the cell membrane. Functionally, essential for the production of a quorum sensing system signal molecule, the autoinducing peptide (AIP). This quorum sensing system is responsible for the regulation of the expression of virulence factor genes. Involved in the proteolytic processing of AgrD, the precursor of AIP. In Staphylococcus aureus (strain Mu50 / ATCC 700699), this protein is Accessory gene regulator protein B.